A 528-amino-acid polypeptide reads, in one-letter code: GMP synthase [glutamine-hydrolyzing] (528 aa).

One can recognise a Glutamine amidotransferase type-1 domain in the interval 13 to 204; that stretch reads SIVILDFGSQ…VHNICRSKPD (192 aa). Residue Cys-90 is the Nucleophile of the active site. Catalysis depends on residues His-178 and Glu-180. The region spanning 205–403 is the GMPS ATP-PPase domain; sequence WTTNTFIDEA…LGLPEEIVNR (199 aa). An ATP-binding site is contributed by 232–238; the sequence is SGGVDSS.

As to quaternary structure, homodimer.

It catalyses the reaction XMP + L-glutamine + ATP + H2O = GMP + L-glutamate + AMP + diphosphate + 2 H(+). The protein operates within purine metabolism; GMP biosynthesis; GMP from XMP (L-Gln route): step 1/1. Functionally, catalyzes the synthesis of GMP from XMP. The chain is GMP synthase [glutamine-hydrolyzing] from Prochlorococcus marinus (strain SARG / CCMP1375 / SS120).